The chain runs to 957 residues: Glycine dehydrogenase (decarboxylating) (957 aa).

An N6-(pyridoxal phosphate)lysine modification is found at K708.

Belongs to the GcvP family. The glycine cleavage system is composed of four proteins: P, T, L and H. The cofactor is pyridoxal 5'-phosphate.

The enzyme catalyses N(6)-[(R)-lipoyl]-L-lysyl-[glycine-cleavage complex H protein] + glycine + H(+) = N(6)-[(R)-S(8)-aminomethyldihydrolipoyl]-L-lysyl-[glycine-cleavage complex H protein] + CO2. Functionally, the glycine cleavage system catalyzes the degradation of glycine. The P protein binds the alpha-amino group of glycine through its pyridoxal phosphate cofactor; CO(2) is released and the remaining methylamine moiety is then transferred to the lipoamide cofactor of the H protein. The protein is Glycine dehydrogenase (decarboxylating) of Salmonella typhi.